The following is a 479-amino-acid chain: Ribosomal RNA small subunit methyltransferase F (479 aa).

Residues 125-131 (AAAPGSK), Glu-149, Asp-176, and Asp-194 contribute to the S-adenosyl-L-methionine site. Cys-247 functions as the Nucleophile in the catalytic mechanism.

Belongs to the class I-like SAM-binding methyltransferase superfamily. RsmB/NOP family.

Its subcellular location is the cytoplasm. It carries out the reaction cytidine(1407) in 16S rRNA + S-adenosyl-L-methionine = 5-methylcytidine(1407) in 16S rRNA + S-adenosyl-L-homocysteine + H(+). Functionally, specifically methylates the cytosine at position 1407 (m5C1407) of 16S rRNA. The chain is Ribosomal RNA small subunit methyltransferase F from Shigella dysenteriae serotype 1 (strain Sd197).